The chain runs to 139 residues: Protein archease (139 aa).

Residues Asp-12, Asp-138, and Ile-139 each contribute to the Ca(2+) site.

Belongs to the archease family.

Its function is as follows. Activates the tRNA-splicing ligase complex by facilitating the enzymatic turnover of catalytic subunit RtcB. Acts by promoting the guanylylation of RtcB, a key intermediate step in tRNA ligation. Can also alter the NTP specificity of RtcB such that ATP, dGTP or ITP is used efficiently. The protein is Protein archease of Saccharolobus islandicus (strain Y.N.15.51 / Yellowstone #2) (Sulfolobus islandicus).